Here is a 157-residue protein sequence, read N- to C-terminus: Transcription elongation factor GreA (157 aa).

Belongs to the GreA/GreB family.

Its function is as follows. Necessary for efficient RNA polymerase transcription elongation past template-encoded arresting sites. The arresting sites in DNA have the property of trapping a certain fraction of elongating RNA polymerases that pass through, resulting in locked ternary complexes. Cleavage of the nascent transcript by cleavage factors such as GreA or GreB allows the resumption of elongation from the new 3'terminus. GreA releases sequences of 2 to 3 nucleotides. The polypeptide is Transcription elongation factor GreA (Caulobacter sp. (strain K31)).